Reading from the N-terminus, the 182-residue chain is Large ribosomal subunit protein uL5 (182 aa).

The protein belongs to the universal ribosomal protein uL5 family. Part of the 50S ribosomal subunit; part of the 5S rRNA/L5/L18/L25 subcomplex. Contacts the 5S rRNA and the P site tRNA. Forms a bridge to the 30S subunit in the 70S ribosome.

Functionally, this is one of the proteins that bind and probably mediate the attachment of the 5S RNA into the large ribosomal subunit, where it forms part of the central protuberance. In the 70S ribosome it contacts protein S13 of the 30S subunit (bridge B1b), connecting the 2 subunits; this bridge is implicated in subunit movement. Contacts the P site tRNA; the 5S rRNA and some of its associated proteins might help stabilize positioning of ribosome-bound tRNAs. The polypeptide is Large ribosomal subunit protein uL5 (Borrelia hermsii (strain HS1 / DAH)).